The sequence spans 150 residues: Profilin (150 aa).

This sequence belongs to the profilin family. Occurs in many kinds of cells as a complex with monomeric actin in a 1:1 ratio.

The protein localises to the cytoplasm. Its subcellular location is the cytoskeleton. In terms of biological role, binds to actin and affects the structure of the cytoskeleton. At high concentrations, profilin prevents the polymerization of actin, whereas it enhances it at low concentrations. By binding to PIP2, it inhibits the formation of IP3 and DG. In Trypanosoma brucei brucei, this protein is Profilin.